The following is a 427-amino-acid chain: Putative F-box protein At4g10740 (427 aa).

Residues 2 to 47 form the F-box domain; sequence RTTMSNLPKELVEDIVSRVPLHCLRAMRLTCKNWNALLESQSFKKM.

The sequence is that of Putative F-box protein At4g10740 from Arabidopsis thaliana (Mouse-ear cress).